The sequence spans 549 residues: Oxygen-dependent choline dehydrogenase (549 aa).

Residue 4–33 (DFVIIGSGSAGSALAYRLSEDGRNSVIVLE) participates in FAD binding. H465 serves as the catalytic Proton acceptor.

It belongs to the GMC oxidoreductase family. FAD serves as cofactor.

The protein localises to the cell membrane. It carries out the reaction choline + A = betaine aldehyde + AH2. The catalysed reaction is betaine aldehyde + NAD(+) + H2O = glycine betaine + NADH + 2 H(+). It participates in amine and polyamine biosynthesis; betaine biosynthesis via choline pathway; betaine aldehyde from choline (cytochrome c reductase route): step 1/1. In terms of biological role, involved in the biosynthesis of the osmoprotectant glycine betaine. Catalyzes the oxidation of choline to betaine aldehyde and betaine aldehyde to glycine betaine at the same rate. The sequence is that of Oxygen-dependent choline dehydrogenase from Rhizobium meliloti (strain 1021) (Ensifer meliloti).